The chain runs to 392 residues: ATP phosphoribosyltransferase regulatory subunit (392 aa).

The protein belongs to the class-II aminoacyl-tRNA synthetase family. HisZ subfamily. Heteromultimer composed of HisG and HisZ subunits.

The protein resides in the cytoplasm. It participates in amino-acid biosynthesis; L-histidine biosynthesis; L-histidine from 5-phospho-alpha-D-ribose 1-diphosphate: step 1/9. Its function is as follows. Required for the first step of histidine biosynthesis. May allow the feedback regulation of ATP phosphoribosyltransferase activity by histidine. This Gloeobacter violaceus (strain ATCC 29082 / PCC 7421) protein is ATP phosphoribosyltransferase regulatory subunit.